A 572-amino-acid chain; its full sequence is Methionine--tRNA ligase (572 aa).

Residues 11-21 carry the 'HIGH' region motif; the sequence is PYINGIKHLGN. Zn(2+) contacts are provided by cysteine 143, cysteine 146, cysteine 156, and cysteine 159. Residues 346–350 carry the 'KMSKS' region motif; that stretch reads QFSTS. Residue threonine 349 participates in ATP binding.

It belongs to the class-I aminoacyl-tRNA synthetase family. MetG type 1 subfamily. As to quaternary structure, monomer. Zn(2+) serves as cofactor.

It localises to the cytoplasm. The catalysed reaction is tRNA(Met) + L-methionine + ATP = L-methionyl-tRNA(Met) + AMP + diphosphate. In terms of biological role, is required not only for elongation of protein synthesis but also for the initiation of all mRNA translation through initiator tRNA(fMet) aminoacylation. The chain is Methionine--tRNA ligase from Cereibacter sphaeroides (strain ATCC 17029 / ATH 2.4.9) (Rhodobacter sphaeroides).